Here is a 33-residue protein sequence, read N- to C-terminus: Dermaseptin DS VIII-like peptide (33 aa).

Ala33 is modified (alanine amide).

Expressed by the parotoid glands.

It is found in the secreted. Its function is as follows. Possesses a potent antimicrobial activity against bacteria, fungi and protozoa. Probably acts by disturbing membrane functions with its amphipathic structure. This chain is Dermaseptin DS VIII-like peptide, found in Phyllomedusa burmeisteri (Brazilian common walking leaf frog).